Reading from the N-terminus, the 268-residue chain is Tropinone reductase homolog At2g29370 (268 aa).

Position 22–46 (22–46 (LVTGGSKGLGKAVVEELAMLGARVH)) interacts with NADP(+). Ser155 is a substrate binding site. The active-site Proton acceptor is Tyr168.

It belongs to the short-chain dehydrogenases/reductases (SDR) family. SDR65C subfamily.

The polypeptide is Tropinone reductase homolog At2g29370 (Arabidopsis thaliana (Mouse-ear cress)).